We begin with the raw amino-acid sequence, 450 residues long: MREIVHVQVGRCGNQIGSKFWEVISDEHGIDPCGRYHGDSDLQLERINVYYNEAFGAKYVPRAVLVDLEPSTMDSIRGGPYGSLYRPDNVVCGASGAGNNWAKGHYTEGADLLETVLDVVRKEAEGCDCLQGFQLVHSLGGGTGSGMGTLLLANLTDEYPDRITATYSVVPSPTVSETVVEPYNATLSVNQLIENSIQSYCIDNEALYYICHRTLKLMAPTYGALNHLVSLTMSGVTTCLRFPGQLNADLRKLAVNMIPFPRLHFFMPGFAPLTSRGSQQYRALTVPELTQQMFDAKNMMAACDPHRGRYLTVATVFRGRMSMKEIDEQILNVQKKNKDFFVEWIPNNVQTAVCDIPPRGMKMSATFIGNTTAIQEIFKRISEQFAAMFSRKAFLHWYTGEGMEEGDFAEADNNVSDLLSEYQQYQDATIDQEFEDEEEVEEQNDDSDEQ.

Residues glutamate 69, serine 138, glycine 142, threonine 143, glycine 144, asparagine 204, and asparagine 226 each contribute to the GTP site. Glutamate 69 serves as a coordination point for Mg(2+). Positions 427–450 (DATIDQEFEDEEEVEEQNDDSDEQ) are disordered. The span at 430–450 (IDQEFEDEEEVEEQNDDSDEQ) shows a compositional bias: acidic residues.

It belongs to the tubulin family. As to quaternary structure, dimer of alpha and beta chains. A typical microtubule is a hollow water-filled tube with an outer diameter of 25 nm and an inner diameter of 15 nM. Alpha-beta heterodimers associate head-to-tail to form protofilaments running lengthwise along the microtubule wall with the beta-tubulin subunit facing the microtubule plus end conferring a structural polarity. Microtubules usually have 13 protofilaments but different protofilament numbers can be found in some organisms and specialized cells. Requires Mg(2+) as cofactor.

The protein resides in the cytoplasm. It localises to the cytoskeleton. Its function is as follows. Tubulin is the major constituent of microtubules, a cylinder consisting of laterally associated linear protofilaments composed of alpha- and beta-tubulin heterodimers. Microtubules grow by the addition of GTP-tubulin dimers to the microtubule end, where a stabilizing cap forms. Below the cap, tubulin dimers are in GDP-bound state, owing to GTPase activity of alpha-tubulin. This is Tubulin beta chain from Bombyx mori (Silk moth).